The following is a 739-amino-acid chain: Protein NPGR2 (739 aa).

The segment at 32–71 (EQMRHREEEDKKSEVGVGRDYNGSSALSTAESENAKKLDN) is disordered. A compositionally biased stretch (basic and acidic residues) spans 33–45 (QMRHREEEDKKSE). Positions 53 to 63 (NGSSALSTAES) are enriched in polar residues. TPR repeat units follow at residues 90 to 127 (EEARALLGRIEYQKGNIEAALRVFEGIDINGITVKMKT), 162 to 195 (FEAIFLKAKSLQRLGRFQEAAESCRVILDIVETS), 215 to 248 (TKAVELLPELWKLADSPRDAILSYRRALLNHWKL), 465 to 498 (PRVVHRLALENAEQRKLDSALAYAKEALKLGAES), 500 to 533 (LEVWLLLARVLSAQKRFSDAETIVDAALNETGKW), 536 to 569 (GKLLRLKAKLRLAKGEVKDAIKTYTQLLALLQVQ), 592 to 625 (LGTWHDLAHIYINLSQWRDAESCLSRSRLIAPYS), 626 to 659 (SVRYHIEGVLYNRRGQLEEAMEAFTTALDIDPMH), and 697 to 733 (HSAWYNLGKMFKAEGSVSSMQEAVECFQAAVTLEETM).

In terms of assembly, interacts with calmodulin in a calcium-dependent manner. In terms of tissue distribution, expressed in pollen, flowers and fruits.

In Arabidopsis thaliana (Mouse-ear cress), this protein is Protein NPGR2.